Reading from the N-terminus, the 148-residue chain is Photosystem I reaction center subunit XI (148 aa).

3 helical membrane-spanning segments follow: residues leucine 48–leucine 68, isoleucine 73–leucine 93, and glycine 122–isoleucine 142.

Belongs to the PsaL family.

The protein resides in the plastid. It is found in the chloroplast thylakoid membrane. This is Photosystem I reaction center subunit XI from Thalassiosira pseudonana (Marine diatom).